The chain runs to 110 residues: MVLLESEQFLTELTRLFQKCRSSGSVFITLKKYDGRTKPIPRKSSVEGLEPAENKCLLRATDGKRKISTVVSSKEVNKFQMAYSNLLRANMDGLKKRDKKNKSKKSKPAQ.

Serine 45 carries the post-translational modification Phosphoserine. The disordered stretch occupies residues asparagine 90–glutamine 110. Positions lysine 96 to glutamine 110 are enriched in basic residues.

The protein belongs to the SRP14 family. Heterodimer with SRP9; binds RNA as heterodimer. Component of a signal recognition particle (SRP) complex that consists of a 7SL RNA molecule of 300 nucleotides and six protein subunits: SRP72, SRP68, SRP54, SRP19, SRP14 and SRP9.

The protein resides in the cytoplasm. Component of the signal recognition particle (SRP) complex, a ribonucleoprotein complex that mediates the cotranslational targeting of secretory and membrane proteins to the endoplasmic reticulum (ER). SRP9 together with SRP14 and the Alu portion of the SRP RNA, constitutes the elongation arrest domain of SRP. The complex of SRP9 and SRP14 is required for SRP RNA binding. This is Signal recognition particle 14 kDa protein (Srp14) from Mus musculus (Mouse).